The following is a 56-amino-acid chain: Ferredoxin (56 aa).

2 consecutive 4Fe-4S ferredoxin-type domains span residues 2-29 (AYVI…AGDD) and 29-56 (DKYV…PQPE). [4Fe-4S] cluster-binding residues include Cys9, Cys12, Cys15, Cys19, Cys38, Cys41, Cys44, and Cys48.

The cofactor is [4Fe-4S] cluster.

Its function is as follows. Ferredoxins are iron-sulfur proteins that transfer electrons in a wide variety of metabolic reactions. In Acetoanaerobium sticklandii (strain ATCC 12662 / DSM 519 / JCM 1433 / CCUG 9281 / NCIMB 10654 / HF) (Clostridium sticklandii), this protein is Ferredoxin.